A 92-amino-acid polypeptide reads, in one-letter code: MAKGQSLQDPFLNALRRERVPVSVYLVNGIKLQGTIESFDQFVVLLRNTVSQMVYKHAISTVVPARNVRVGPGGGYVHSGSDTLQINDDEVE.

In terms of domain architecture, Sm spans 9–68; it reads DPFLNALRRERVPVSVYLVNGIKLQGTIESFDQFVVLLRNTVSQMVYKHAISTVVPARNV.

It belongs to the Hfq family. As to quaternary structure, homohexamer.

Functionally, RNA chaperone that binds small regulatory RNA (sRNAs) and mRNAs to facilitate mRNA translational regulation in response to envelope stress, environmental stress and changes in metabolite concentrations. Also binds with high specificity to tRNAs. In Xylella fastidiosa (strain M12), this protein is RNA-binding protein Hfq.